The primary structure comprises 446 residues: Probable glycine dehydrogenase (decarboxylating) subunit 1 (446 aa).

The protein belongs to the GcvP family. N-terminal subunit subfamily. The glycine cleavage system is composed of four proteins: P, T, L and H. In this organism, the P 'protein' is a heterodimer of two subunits.

The enzyme catalyses N(6)-[(R)-lipoyl]-L-lysyl-[glycine-cleavage complex H protein] + glycine + H(+) = N(6)-[(R)-S(8)-aminomethyldihydrolipoyl]-L-lysyl-[glycine-cleavage complex H protein] + CO2. In terms of biological role, the glycine cleavage system catalyzes the degradation of glycine. The P protein binds the alpha-amino group of glycine through its pyridoxal phosphate cofactor; CO(2) is released and the remaining methylamine moiety is then transferred to the lipoamide cofactor of the H protein. The protein is Probable glycine dehydrogenase (decarboxylating) subunit 1 of Methylocella silvestris (strain DSM 15510 / CIP 108128 / LMG 27833 / NCIMB 13906 / BL2).